The sequence spans 343 residues: Programmed cell death protein 2 (343 aa).

8 residues coordinate Zn(2+): C134, C137, C145, C148, C154, H158, H167, and C171. The MYND-type; atypical zinc finger occupies 134-171; sequence CRVCGCLAPMTCSRCKQAHYCSKEHQTLDWQLGHKQAC.

Ubiquitinated by PRKN, promoting proteasomal degradation.

It is found in the nucleus. In terms of biological role, may be a DNA-binding protein with a regulatory function. May play an important role in cell death and/or in regulation of cell proliferation. The chain is Programmed cell death protein 2 (Pdcd2) from Rattus norvegicus (Rat).